The following is a 287-amino-acid chain: BURP domain-containing protein 2 (287 aa).

Residues 1-21 (MARSLAALLLLLVAAAGASHA) form the signal peptide. One can recognise a BURP domain in the interval 67 to 287 (FFLEKDLFPG…PQDDMLWVRN (221 aa)).

Expressed in shoot.

This chain is BURP domain-containing protein 2 (BURP2), found in Oryza sativa subsp. japonica (Rice).